The primary structure comprises 105 residues: Large ribosomal subunit protein eL30 (105 aa).

Glycyl lysine isopeptide (Lys-Gly) (interchain with G-Cter in ubiquitin) cross-links involve residues Lys-22, Lys-53, and Lys-83.

This sequence belongs to the eukaryotic ribosomal protein eL30 family. Component of the large ribosomal subunit (LSU). Mature yeast ribosomes consist of a small (40S) and a large (60S) subunit. The 40S small subunit contains 1 molecule of ribosomal RNA (18S rRNA) and 33 different proteins (encoded by 57 genes). The large 60S subunit contains 3 rRNA molecules (25S, 5.8S and 5S rRNA) and 46 different proteins (encoded by 81 genes).

Its subcellular location is the cytoplasm. Functionally, component of the ribosome, a large ribonucleoprotein complex responsible for the synthesis of proteins in the cell. The small ribosomal subunit (SSU) binds messenger RNAs (mRNAs) and translates the encoded message by selecting cognate aminoacyl-transfer RNA (tRNA) molecules. The large subunit (LSU) contains the ribosomal catalytic site termed the peptidyl transferase center (PTC), which catalyzes the formation of peptide bonds, thereby polymerizing the amino acids delivered by tRNAs into a polypeptide chain. The nascent polypeptides leave the ribosome through a tunnel in the LSU and interact with protein factors that function in enzymatic processing, targeting, and the membrane insertion of nascent chains at the exit of the ribosomal tunnel. This Saccharomyces cerevisiae (strain ATCC 204508 / S288c) (Baker's yeast) protein is Large ribosomal subunit protein eL30.